The primary structure comprises 443 residues: SURP and G-patch domain-containing protein 1-like protein (443 aa).

2 disordered regions span residues 45-71 (IISN…KGGK) and 83-141 (LAPP…TVKK). Residues 142-185 (VADKLASFVAKHGRPFEHITRQKNPGDTPFKFLFDENCADYKYY) form an SURP motif repeat. Disordered regions lie at residues 198–221 (QTKD…AIPL), 241–272 (TPVE…RGAD), and 285–325 (AQEE…HHMG). A compositionally biased stretch (polar residues) spans 248–265 (SSRSAQASITRPSDSDSF). Residues 285-300 (AQEEKMRRPRQSKDEM) show a composition bias toward basic and acidic residues. Residues 307-316 (QGPSETSSTD) show a composition bias toward polar residues. The G-patch domain occupies 360 to 407 (ADNVGHKLLSKMGWKEGEGIGSSRKGMADPIMAGDVKTNNLGVGASAP).

It is found in the nucleus. The chain is SURP and G-patch domain-containing protein 1-like protein from Arabidopsis thaliana (Mouse-ear cress).